The chain runs to 210 residues: Vacuolar protein sorting-associated protein 28 homolog (210 aa).

In terms of domain architecture, VPS28 N-terminal spans 1–106 (MSSQNANLMR…REGRPITVKD (106 aa)). The region spanning 110 to 206 (NVLKHIASIV…AYQAFNKALN (97 aa)) is the VPS28 C-terminal domain.

The protein belongs to the VPS28 family. In terms of assembly, component of the ESCRT-I complex (endosomal sorting complex required for transport I). Expressed in embryos.

The protein localises to the endosome. Functionally, component of the ESCRT-I complex, a regulator of vesicular trafficking process. This is Vacuolar protein sorting-associated protein 28 homolog (vps-28) from Caenorhabditis elegans.